Here is a 519-residue protein sequence, read N- to C-terminus: NADH-quinone oxidoreductase subunit N (519 aa).

14 helical membrane-spanning segments follow: residues 22–42, 53–73, 87–107, 141–161, 163–183, 198–218, 242–262, 287–307, 310–330, 336–356, 363–383, 406–426, 442–461, and 483–503; these read LLPM…EAFV, VLAL…TGLP, PTLF…LLIA, TEVF…PAAN, LITA…LAGM, YFLL…LVYG, IIVG…GVPF, VAAF…LAWD, PVIW…GITQ, LLAY…AATT, VLFY…IVIL, LVAG…PTSG, AGPL…YYYL, and GALA…LGIV.

It belongs to the complex I subunit 2 family. In terms of assembly, NDH-1 is composed of 14 different subunits. Subunits NuoA, H, J, K, L, M, N constitute the membrane sector of the complex.

Its subcellular location is the cell membrane. It carries out the reaction a quinone + NADH + 5 H(+)(in) = a quinol + NAD(+) + 4 H(+)(out). In terms of biological role, NDH-1 shuttles electrons from NADH, via FMN and iron-sulfur (Fe-S) centers, to quinones in the respiratory chain. The immediate electron acceptor for the enzyme in this species is believed to be a menaquinone. Couples the redox reaction to proton translocation (for every two electrons transferred, four hydrogen ions are translocated across the cytoplasmic membrane), and thus conserves the redox energy in a proton gradient. This Acidothermus cellulolyticus (strain ATCC 43068 / DSM 8971 / 11B) protein is NADH-quinone oxidoreductase subunit N.